The sequence spans 802 residues: Elongation factor G, mitochondrial (802 aa).

Residues 1 to 24 (MRYPSLARLPRRALSGLARAPVRL) constitute a mitochondrion transit peptide. Positions 100 to 387 (SRVRNIGIAA…GVIDYLPNPS (288 aa)) constitute a tr-type G domain. Residues 109 to 116 (AHIDSGKT), 185 to 189 (DTPGH), and 239 to 242 (NKMD) contribute to the GTP site.

It belongs to the TRAFAC class translation factor GTPase superfamily. Classic translation factor GTPase family. EF-G/EF-2 subfamily.

It localises to the mitochondrion. It participates in protein biosynthesis; polypeptide chain elongation. Mitochondrial GTPase that catalyzes the GTP-dependent ribosomal translocation step during translation elongation. During this step, the ribosome changes from the pre-translocational (PRE) to the post-translocational (POST) state as the newly formed A-site-bound peptidyl-tRNA and P-site-bound deacylated tRNA move to the P and E sites, respectively. Catalyzes the coordinated movement of the two tRNA molecules, the mRNA and conformational changes in the ribosome. In Aspergillus terreus (strain NIH 2624 / FGSC A1156), this protein is Elongation factor G, mitochondrial (mef1).